We begin with the raw amino-acid sequence, 86 residues long: Anti-adapter protein IraP (86 aa).

The stretch at 1-36 forms a coiled coil; the sequence is MKNLIAELLLKLAQKEEESKELVAQVEALEIIVTAM.

This sequence belongs to the IraP family. As to quaternary structure, interacts with RssB.

It is found in the cytoplasm. Inhibits RpoS proteolysis by regulating RssB activity, thereby increasing the stability of the sigma stress factor RpoS especially during phosphate and magnesium starvation, but also in stationary phase and during nitrogen starvation. Its effect on RpoS stability is due to its interaction with RssB, which probably blocks the interaction of RssB with RpoS, and the consequent delivery of the RssB-RpoS complex to the ClpXP protein degradation pathway. The chain is Anti-adapter protein IraP from Salmonella choleraesuis (strain SC-B67).